Consider the following 270-residue polypeptide: Ribosomal RNA-processing protein 7 homolog (270 aa).

A coiled-coil region spans residues 233-268 (TFQIKKNRQEKAQELLKKFEEDRKRITQLKQARNFK).

This sequence belongs to the RRP7 family.

In Caenorhabditis elegans, this protein is Ribosomal RNA-processing protein 7 homolog.